The primary structure comprises 117 residues: Protein RALF-like 27 (117 aa).

Residues 1 to 27 form the signal peptide; sequence MTKTFFSFSFFFTSSLLLLLAATSATA. A propeptide spans 28–71 (removed in mature form); the sequence is STGNVTSGLRYDGCAPGDTVGECITATVEEEDEEGVEAVVRRIL. Asn-31 carries an N-linked (GlcNAc...) asparagine glycan. 2 disulfide bridges follow: Cys-88/Cys-96 and Cys-107/Cys-113.

Belongs to the plant rapid alkalinization factor (RALF) family.

It is found in the secreted. In terms of biological role, cell signaling peptide that may regulate plant stress, growth, and development. Mediates a rapid alkalinization of extracellular space by mediating a transient increase in the cytoplasmic Ca(2+) concentration leading to a calcium-dependent signaling events through a cell surface receptor and a concomitant activation of some intracellular mitogen-activated protein kinases. In Arabidopsis thaliana (Mouse-ear cress), this protein is Protein RALF-like 27 (RALFL27).